Reading from the N-terminus, the 268-residue chain is Tryptophan synthase alpha chain (268 aa).

Residues Glu49 and Asp60 each act as proton acceptor in the active site.

This sequence belongs to the TrpA family. As to quaternary structure, tetramer of two alpha and two beta chains.

The catalysed reaction is (1S,2R)-1-C-(indol-3-yl)glycerol 3-phosphate + L-serine = D-glyceraldehyde 3-phosphate + L-tryptophan + H2O. It functions in the pathway amino-acid biosynthesis; L-tryptophan biosynthesis; L-tryptophan from chorismate: step 5/5. Its function is as follows. The alpha subunit is responsible for the aldol cleavage of indoleglycerol phosphate to indole and glyceraldehyde 3-phosphate. In Escherichia coli O127:H6 (strain E2348/69 / EPEC), this protein is Tryptophan synthase alpha chain.